Here is a 434-residue protein sequence, read N- to C-terminus: Bestrophin homolog 12 (434 aa).

A run of 4 helical transmembrane segments spans residues 31 to 51 (KVIL…FLVF), 76 to 96 (VCIP…DQWE), 244 to 264 (IPIP…YFFF), and 278 to 298 (WALS…FLVG).

Belongs to the anion channel-forming bestrophin (TC 1.A.46) family. Calcium-sensitive chloride channel subfamily. Forms oligomers.

It is found in the cell membrane. Forms chloride channels. This chain is Bestrophin homolog 12 (best-12), found in Caenorhabditis elegans.